The chain runs to 295 residues: Cytidine deaminase (295 aa).

CMP/dCMP-type deaminase domains lie at 48 to 168 and 187 to 295; these read ADDE…FGPA and EETT…YLAI. Substrate is bound at residue 89 to 91; sequence NLE. His102 is a binding site for Zn(2+). The Proton donor role is filled by Glu104. Zn(2+)-binding residues include Cys129 and Cys132.

This sequence belongs to the cytidine and deoxycytidylate deaminase family. Homodimer. It depends on Zn(2+) as a cofactor.

It catalyses the reaction cytidine + H2O + H(+) = uridine + NH4(+). It carries out the reaction 2'-deoxycytidine + H2O + H(+) = 2'-deoxyuridine + NH4(+). Its function is as follows. This enzyme scavenges exogenous and endogenous cytidine and 2'-deoxycytidine for UMP synthesis. The sequence is that of Cytidine deaminase from Vibrio atlanticus (strain LGP32) (Vibrio splendidus (strain Mel32)).